Consider the following 195-residue polypeptide: Probable chorismate pyruvate-lyase (195 aa).

Substrate-binding residues include Arg-79, Leu-117, and Glu-180.

Belongs to the UbiC family.

The protein resides in the cytoplasm. The enzyme catalyses chorismate = 4-hydroxybenzoate + pyruvate. It participates in cofactor biosynthesis; ubiquinone biosynthesis. Removes the pyruvyl group from chorismate, with concomitant aromatization of the ring, to provide 4-hydroxybenzoate (4HB) for the ubiquinone pathway. The polypeptide is Probable chorismate pyruvate-lyase (Ralstonia nicotianae (strain ATCC BAA-1114 / GMI1000) (Ralstonia solanacearum)).